Consider the following 452-residue polypeptide: Probable glycine dehydrogenase (decarboxylating) subunit 1 (452 aa).

The protein belongs to the GcvP family. N-terminal subunit subfamily. As to quaternary structure, the glycine cleavage system is composed of four proteins: P, T, L and H. In this organism, the P 'protein' is a heterodimer of two subunits.

The enzyme catalyses N(6)-[(R)-lipoyl]-L-lysyl-[glycine-cleavage complex H protein] + glycine + H(+) = N(6)-[(R)-S(8)-aminomethyldihydrolipoyl]-L-lysyl-[glycine-cleavage complex H protein] + CO2. In terms of biological role, the glycine cleavage system catalyzes the degradation of glycine. The P protein binds the alpha-amino group of glycine through its pyridoxal phosphate cofactor; CO(2) is released and the remaining methylamine moiety is then transferred to the lipoamide cofactor of the H protein. The chain is Probable glycine dehydrogenase (decarboxylating) subunit 1 from Novosphingobium aromaticivorans (strain ATCC 700278 / DSM 12444 / CCUG 56034 / CIP 105152 / NBRC 16084 / F199).